The following is a 623-amino-acid chain: Glutamine--fructose-6-phosphate aminotransferase [isomerizing] (623 aa).

Residue C2 is the Nucleophile; for GATase activity of the active site. A Glutamine amidotransferase type-2 domain is found at 2–228; that stretch reads CGIVGYIGQA…NDQVVTITAD (227 aa). 2 consecutive SIS domains span residues 295-435 and 468-613; these read IDES…LRGN and LGRS…VDQP. K618 (for Fru-6P isomerization activity) is an active-site residue.

Homodimer.

The protein resides in the cytoplasm. The catalysed reaction is D-fructose 6-phosphate + L-glutamine = D-glucosamine 6-phosphate + L-glutamate. Functionally, catalyzes the first step in hexosamine metabolism, converting fructose-6P into glucosamine-6P using glutamine as a nitrogen source. In Corynebacterium efficiens (strain DSM 44549 / YS-314 / AJ 12310 / JCM 11189 / NBRC 100395), this protein is Glutamine--fructose-6-phosphate aminotransferase [isomerizing].